The following is a 320-amino-acid chain: Phosphatidylserine decarboxylase proenzyme (320 aa).

Residues Asp90, His147, and Ser254 each act as charge relay system; for autoendoproteolytic cleavage activity in the active site. Catalysis depends on Ser254, which acts as the Schiff-base intermediate with substrate; via pyruvic acid; for decarboxylase activity. Ser254 carries the post-translational modification Pyruvic acid (Ser); by autocatalysis. The segment at 288–320 (EASTAAEPAPLPEEEIRAEHRASPLVDDTQDQG) is disordered.

This sequence belongs to the phosphatidylserine decarboxylase family. PSD-B subfamily. Prokaryotic type I sub-subfamily. As to quaternary structure, heterodimer of a large membrane-associated beta subunit and a small pyruvoyl-containing alpha subunit. The cofactor is pyruvate. In terms of processing, is synthesized initially as an inactive proenzyme. Formation of the active enzyme involves a self-maturation process in which the active site pyruvoyl group is generated from an internal serine residue via an autocatalytic post-translational modification. Two non-identical subunits are generated from the proenzyme in this reaction, and the pyruvate is formed at the N-terminus of the alpha chain, which is derived from the carboxyl end of the proenzyme. The autoendoproteolytic cleavage occurs by a canonical serine protease mechanism, in which the side chain hydroxyl group of the serine supplies its oxygen atom to form the C-terminus of the beta chain, while the remainder of the serine residue undergoes an oxidative deamination to produce ammonia and the pyruvoyl prosthetic group on the alpha chain. During this reaction, the Ser that is part of the protease active site of the proenzyme becomes the pyruvoyl prosthetic group, which constitutes an essential element of the active site of the mature decarboxylase.

It is found in the cell membrane. It catalyses the reaction a 1,2-diacyl-sn-glycero-3-phospho-L-serine + H(+) = a 1,2-diacyl-sn-glycero-3-phosphoethanolamine + CO2. The protein operates within phospholipid metabolism; phosphatidylethanolamine biosynthesis; phosphatidylethanolamine from CDP-diacylglycerol: step 2/2. Functionally, catalyzes the formation of phosphatidylethanolamine (PtdEtn) from phosphatidylserine (PtdSer). This Klebsiella pneumoniae (strain 342) protein is Phosphatidylserine decarboxylase proenzyme.